Consider the following 427-residue polypeptide: Glutamate-1-semialdehyde 2,1-aminomutase (427 aa).

The residue at position 265 (Lys265) is an N6-(pyridoxal phosphate)lysine.

It belongs to the class-III pyridoxal-phosphate-dependent aminotransferase family. HemL subfamily. As to quaternary structure, homodimer. It depends on pyridoxal 5'-phosphate as a cofactor.

The protein resides in the cytoplasm. The catalysed reaction is (S)-4-amino-5-oxopentanoate = 5-aminolevulinate. It participates in porphyrin-containing compound metabolism; protoporphyrin-IX biosynthesis; 5-aminolevulinate from L-glutamyl-tRNA(Glu): step 2/2. This chain is Glutamate-1-semialdehyde 2,1-aminomutase, found in Neisseria meningitidis serogroup C (strain 053442).